The sequence spans 307 residues: Elongation factor Ts (307 aa).

Positions 80–83 are involved in Mg(2+) ion dislocation from EF-Tu; sequence TDFV.

Belongs to the EF-Ts family.

It localises to the cytoplasm. Associates with the EF-Tu.GDP complex and induces the exchange of GDP to GTP. It remains bound to the aminoacyl-tRNA.EF-Tu.GTP complex up to the GTP hydrolysis stage on the ribosome. This is Elongation factor Ts from Rhodopseudomonas palustris (strain BisA53).